The following is a 511-amino-acid chain: Pancreatic alpha-amylase (511 aa).

The N-terminal stretch at Met-1–Ala-15 is a signal peptide. The residue at position 16 (Gln-16) is a Pyrrolidone carboxylic acid. Intrachain disulfides connect Cys-43/Cys-101, Cys-85/Cys-130, and Cys-156/Cys-175. Ca(2+)-binding residues include Asn-115, Arg-173, and Asp-182. Arg-210 serves as a coordination point for chloride. Asp-212 serves as the catalytic Nucleophile. His-216 provides a ligand contact to Ca(2+). Glu-248 (proton donor) is an active-site residue. Residues Asn-313 and Arg-352 each contribute to the chloride site. Intrachain disulfides connect Cys-393–Cys-399 and Cys-465–Cys-477. An N-linked (GlcNAc...) asparagine glycan is attached at Asn-476.

It belongs to the glycosyl hydrolase 13 family. As to quaternary structure, monomer. Binds to the sea anemone inhibitor helianthamide. Ca(2+) is required as a cofactor. Requires chloride as cofactor. In terms of tissue distribution, detected in pancreas (at protein level).

It is found in the secreted. The protein localises to the extracellular space. The enzyme catalyses Endohydrolysis of (1-&gt;4)-alpha-D-glucosidic linkages in polysaccharides containing three or more (1-&gt;4)-alpha-linked D-glucose units.. The sequence is that of Pancreatic alpha-amylase (AMY2A) from Homo sapiens (Human).